The sequence spans 394 residues: Cell division protein FtsZ (394 aa).

GTP-binding positions include 21-25 (GGGGN), 108-110 (GTG), E139, R143, and D187.

It belongs to the FtsZ family. Homodimer. Polymerizes to form a dynamic ring structure in a strictly GTP-dependent manner. Interacts directly with several other division proteins.

The protein resides in the cytoplasm. Essential cell division protein that forms a contractile ring structure (Z ring) at the future cell division site. The regulation of the ring assembly controls the timing and the location of cell division. One of the functions of the FtsZ ring is to recruit other cell division proteins to the septum to produce a new cell wall between the dividing cells. Binds GTP and shows GTPase activity. This Azotobacter vinelandii protein is Cell division protein FtsZ.